A 300-amino-acid chain; its full sequence is Bifunctional protein FolD (300 aa).

Residues 168-170 (GRS), S193, and I234 each bind NADP(+).

This sequence belongs to the tetrahydrofolate dehydrogenase/cyclohydrolase family. Homodimer.

It carries out the reaction (6R)-5,10-methylene-5,6,7,8-tetrahydrofolate + NADP(+) = (6R)-5,10-methenyltetrahydrofolate + NADPH. The catalysed reaction is (6R)-5,10-methenyltetrahydrofolate + H2O = (6R)-10-formyltetrahydrofolate + H(+). It participates in one-carbon metabolism; tetrahydrofolate interconversion. Functionally, catalyzes the oxidation of 5,10-methylenetetrahydrofolate to 5,10-methenyltetrahydrofolate and then the hydrolysis of 5,10-methenyltetrahydrofolate to 10-formyltetrahydrofolate. This chain is Bifunctional protein FolD, found in Ehrlichia ruminantium (strain Welgevonden).